We begin with the raw amino-acid sequence, 471 residues long: Secretogranin-3 (471 aa).

The signal sequence occupies residues 1 to 22 (MGFLWTGTWIVVLMLHSSPIQA). 2 disordered regions span residues 23-72 (FPKP…ESNY) and 86-105 (EKEKNEKERQSVKISPNDNK). Basic and acidic residues predominate over residues 32–45 (KPLHNRELSAERPL). Residue Ser-40 is modified to Phosphoserine. The O-linked (Xyl...) (chondroitin sulfate) serine glycan is linked to Ser-40. The N-linked (GlcNAc...) asparagine glycan is linked to Asn-71. Residues 86–96 (EKEKNEKERQS) are compositionally biased toward basic and acidic residues. Residue Asn-353 is glycosylated (N-linked (GlcNAc...) asparagine). Residues 357-409 (LFAVPSEKSHEETDSTKEEAAKMEKEYGTLKDSTKDDDSNPRGKTDEHKGKTE) are disordered. A compositionally biased stretch (basic and acidic residues) spans 363 to 409 (EKSHEETDSTKEEAAKMEKEYGTLKDSTKDDDSNPRGKTDEHKGKTE). Phosphoserine is present on Ser-365.

In terms of assembly, interacts with CHGA. Interacts with secretogranin II/SCG2. Interacts (via C-terminus) with CPE.

Its subcellular location is the cytoplasmic vesicle. The protein resides in the secretory vesicle. The protein localises to the secretory vesicle membrane. It is found in the secreted. In terms of biological role, member of the granin protein family that regulates the biogenesis of secretory granules. Acts as a sorting receptor for intragranular proteins including chromogranin A/CHGA. May also play a role in angiogenesis. Promotes endothelial proliferation, migration and tube formation through MEK/ERK signaling pathway. The chain is Secretogranin-3 (SCG3) from Bos taurus (Bovine).